Consider the following 906-residue polypeptide: Toll-like receptor 12 (906 aa).

The signal sequence occupies residues 1-21 (MGRYWLLPGLLLSLPLVTGWS). Residues 22-709 (TSNCLVTEGS…DHCPQTLELK (688 aa)) lie on the Extracellular side of the membrane. The N-linked (GlcNAc...) asparagine glycan is linked to asparagine 59. LRR repeat units follow at residues 91–114 (FPGLKVLALSLHLTQLLPGALRGL), 115–140 (GQLQSLSFFDSPLRRSLFLPPDAFSD), 142–170 (ISLQRLHISGPCLDKKAGIRLPPGLQWLG), 198–222 (SWTLQKLDLSSNWKLKMASPGSLQG), 224–247 (QVEILDLTRTPLDAVWLKGLGLQK), 267–290 (HFELQGLIVKESKIGSISQEALAS), 291–314 (CHSLKTLGLSSTGLTKLPPGFLTA), 316–338 (PRLQRLELSGNQLQSAVLCMNET), 341–364 (VSGLTTLDLSGNRLRILPPAAFSC), 366–388 (PHLRELLLRYNQLLSLEGYLFQE), 389–412 (LQQLETLKLDGNPLLHLGKNWLAA), 414–436 (PALTTLSLLDTQIRMSPEPGFWG), 462–484 (LTSLELHIASGTTEHWTLSPAIF), 485–508 (PSLETLTISGGGLKLKLGSQNASG), and 510–533 (FPALQKLSLLKNSLDAFCSQGTSN). A glycan (N-linked (GlcNAc...) asparagine) is linked at asparagine 336. Asparagine 505 is a glycosylation site (N-linked (GlcNAc...) asparagine). N-linked (GlcNAc...) asparagine glycosylation occurs at asparagine 552. 2 LRR repeats span residues 562 to 586 (LPSLRELKLASLQSITQPRSVQLEE) and 591 to 614 (LPQLQALVLSSTGLKSLSAAAFQR). A helical transmembrane segment spans residues 710–730 (LFLASSALVFMLIALPLLQEA). The Cytoplasmic segment spans residues 731 to 906 (RNSWIPYLQA…FWTWLRSRLG (176 aa)). The region spanning 759 to 905 (FLFDVFVSHC…GFWTWLRSRL (147 aa)) is the TIR domain.

This sequence belongs to the Toll-like receptor family. As to quaternary structure, binds MYD88 via their respective TIR domains. Macrophages, liver, kidney and bladder epithelial cells.

The protein resides in the membrane. Functionally, participates in the innate immune response to microbial agents. Acts via MYD88 and TRAF6, leading to NF-kappa-B activation, cytokine secretion and the inflammatory response. Plays a role in preventing infection of internal organs of the urogenital system. The sequence is that of Toll-like receptor 12 from Mus musculus (Mouse).